We begin with the raw amino-acid sequence, 509 residues long: Bifunctional purine biosynthesis protein PurH (509 aa).

Positions 1-144 (MKRALISVSD…KNYAAVTVVV (144 aa)) constitute an MGS-like domain.

The protein belongs to the PurH family.

The catalysed reaction is (6R)-10-formyltetrahydrofolate + 5-amino-1-(5-phospho-beta-D-ribosyl)imidazole-4-carboxamide = 5-formamido-1-(5-phospho-D-ribosyl)imidazole-4-carboxamide + (6S)-5,6,7,8-tetrahydrofolate. The enzyme catalyses IMP + H2O = 5-formamido-1-(5-phospho-D-ribosyl)imidazole-4-carboxamide. Its pathway is purine metabolism; IMP biosynthesis via de novo pathway; 5-formamido-1-(5-phospho-D-ribosyl)imidazole-4-carboxamide from 5-amino-1-(5-phospho-D-ribosyl)imidazole-4-carboxamide (10-formyl THF route): step 1/1. The protein operates within purine metabolism; IMP biosynthesis via de novo pathway; IMP from 5-formamido-1-(5-phospho-D-ribosyl)imidazole-4-carboxamide: step 1/1. The polypeptide is Bifunctional purine biosynthesis protein PurH (Listeria monocytogenes serotype 4b (strain F2365)).